The following is a 231-amino-acid chain: Ribonuclease HII (231 aa).

Residues Trp32–Glu223 enclose the RNase H type-2 domain. Asp38, Glu39, and Asp130 together coordinate a divalent metal cation.

It belongs to the RNase HII family. Mn(2+) is required as a cofactor. The cofactor is Mg(2+).

The protein localises to the cytoplasm. It catalyses the reaction Endonucleolytic cleavage to 5'-phosphomonoester.. Its function is as follows. Endonuclease that specifically degrades the RNA of RNA-DNA hybrids. This chain is Ribonuclease HII, found in Mesorhizobium japonicum (strain LMG 29417 / CECT 9101 / MAFF 303099) (Mesorhizobium loti (strain MAFF 303099)).